The sequence spans 675 residues: Protein PALS1 (675 aa).

Disordered stretches follow at residues 1-34 and 51-78; these read MTTSHMNGHVTEESDSEVKNVDLASPEEHQKHRE and RRSAQLERIRQQQEDMRRRREEEGKKQE. The tract at residues 1–345 is required for the correct localization of PALS1 and PATJ at cell-cell contacts and the normal formation of tight junctions and adherens junctions; the sequence is MTTSHMNGHV…QQIKPPPAKE (345 aa). Composition is skewed to basic and acidic residues over residues 10–34 and 54–78; these read VTEESDSEVKNVDLASPEEHQKHRE and AQLERIRQQQEDMRRRREEEGKKQE. Phosphoserine occurs at positions 14 and 25. The interaction with PARD6B stretch occupies residues 21 to 140; it reads VDLASPEEHQ…LKHIQHTLID (120 aa). Phosphoserine is present on residues Ser83 and Ser84. L27 domains lie at 120 to 177 and 179 to 235; these read KILE…NKAS and PFPL…MQLE. The segment at 181-243 is interaction with LIN7C; it reads PLISNAQDLA…LEPITDERVY (63 aa). One can recognise a PDZ domain in the interval 256–336; that stretch reads IVRIEKARDI…TLTFVLIPSQ (81 aa). The SH3 domain maps to 345-417; sequence ETVIHVKAHF…PGKSFQQQRE (73 aa). In terms of domain architecture, Guanylate kinase-like spans 479 to 660; that stretch reads KRPIILIGPQ…AYQELLRLIN (182 aa). Residue 486-493 coordinates ATP; the sequence is GPQNCGQN.

Belongs to the MAGUK family. As to quaternary structure, heterodimer with MPP1. Forms a heterotrimeric complex composed of PALS1, LIN7B and PATJ; the N-terminal L27 domain of PALS1 interacts with the L27 domain of PATJ and the C-terminal L27 domain of PALS1 interacts with the L27 domain of LIN7B. Component of a complex composed of PALS1, CRB1 and MPP4. Component of a complex whose core is composed of ARHGAP17, AMOT, PALS1, PATJ and PARD3/PAR3. Component of a complex composed of PALS1, CRB1 and EPB41L5. Within the complex, interacts (via HOOK domain) with EPB41L5 (via FERM domain), and interacts with CRB1 (via intracellular domain). Component of a complex composed of PALS1, MPP3 and CRB1; PALS1 acts as a bridging protein between MPP3 (via guanylate kinase-like domain) and CRB1. Component of a complex composed of CRB3, PALS1 and PATJ. As part of the Crumbs complex; interacts with WWP1, the interaction is enhanced by AMOTL2 and facilitates WWP1 localization to the plasma membrane. The Crumbs complex promotes monoubiquitination of AMOTL2 by WWP1, which activates the Hippo signaling pathway. Interacts (via PDZ domain) with PATJ (via N-terminus). Interacts with EZR. Interacts (via PDZ domain) with CRB1 (via C-terminal ERLI motif). While the PDZ domain is sufficient for interaction with CRB1, the adjacent SH3 and guanylate kinase-like domains are likely to contribute to a high affinity interaction. Interacts with WWTR1/TAZ (via WW domain). Interacts with MPP7. Interacts (via PDZ domain) with CRB3 (via C-terminus). Interacts with LIN7C. Interacts with MPDZ. Interacts with PARD6B. Interacts with SC6A1. Interacts with CDH5; the interaction promotes PALS1 localization to cell junctions and is required for CDH5-mediated vascular lumen formation and endothelial cell. Interacts with NPHP1 (via coiled coil and SH3 domains). Interacts with NPHP4. Interacts with CRB2.

It localises to the golgi apparatus. The protein localises to the cell membrane. The protein resides in the endomembrane system. It is found in the cell junction. Its subcellular location is the tight junction. It localises to the adherens junction. The protein localises to the cell projection. The protein resides in the axon. It is found in the perikaryon. Its subcellular location is the apical cell membrane. Its function is as follows. Plays a role in tight junction biogenesis and in the establishment of cell polarity in epithelial cells. Also involved in adherens junction biogenesis by ensuring correct localization of the exocyst complex protein EXOC4/SEC8 which allows trafficking of adherens junction structural component CDH1 to the cell surface. Plays a role through its interaction with CDH5 in vascular lumen formation and endothelial membrane polarity. Required during embryonic and postnatal retinal development. Required for the maintenance of cerebellar progenitor cells in an undifferentiated proliferative state, preventing premature differentiation, and is required for cerebellar histogenesis, fissure formation, cerebellar layer organization and cortical development. Plays a role in neuronal progenitor cell survival, potentially via promotion of mTOR signaling. Plays a role in the radial and longitudinal extension of the myelin sheath in Schwann cells. May modulate SC6A1/GAT1-mediated GABA uptake by stabilizing the transporter. May play a role in the T-cell receptor-mediated activation of NF-kappa-B. Required for localization of EZR to the apical membrane of parietal cells and may play a role in the dynamic remodeling of the apical cytoskeleton. Required for the normal polarized localization of the vesicular marker STX4. Required for the correct trafficking of the myelin proteins PMP22 and MAG. Involved in promoting phosphorylation and cytoplasmic retention of transcriptional coactivators YAP1 and WWTR1/TAZ which leads to suppression of TGFB1-dependent transcription of target genes such as CCN2/CTGF, SERPINE1/PAI1, SNAI1/SNAIL1 and SMAD7. The chain is Protein PALS1 from Pongo abelii (Sumatran orangutan).